The following is a 478-amino-acid chain: Metalloendopeptidase OMA1, mitochondrial (478 aa).

The interval 134–164 (LGRSIRKWWVALPANKKQLFREWSWRRRWHF) is stress-sensor region. A helical membrane pass occupies residues 163–183 (HFLGAGTGLLFIASLFFFTHL). Position 296 (H296) interacts with Zn(2+). The active site involves E297. Positions 300 and 361 each coordinate Zn(2+). An intrachain disulfide couples C376 to C434.

It belongs to the peptidase M48 family. In terms of assembly, homooligomer. Zn(2+) serves as cofactor. In terms of processing, autocatalytically cleaved in response to mitochondrial depolarization both at the N-terminus and C-terminus to generate the short active form (S-OMA1). The S-OMA1 form is unstable. Post-translationally, may form a redox-dependent disulfide bond. Exists in a semi-oxidized state and is activated by prolonged hypoxia.

It localises to the mitochondrion inner membrane. Protease activity is activated upon autocatalytic cleavage in response to mitochondrial depolarization. Functionally, metalloprotease that is part of the quality control system in the inner membrane of mitochondria. Activated in response to various mitochondrial stress, leading to the proteolytic cleavage of target proteins, such as opa1 and dele1. Involved in the fusion of the mitochondrial inner membranes by mediating cleavage of opa1 at S1 position, generating the soluble opa1 (S-opa1), which cooperates with the membrane form (L-opa1) to coordinate the fusion of mitochondrial inner membranes. Following stress conditions that induce loss of mitochondrial membrane potential, mediates cleavage of opa1, leading to excess production of soluble opa1 (S-opa1) and negative regulation of mitochondrial fusion. Also acts as an activator of the integrated stress response (ISR): in response to mitochondrial stress, mediates cleavage of dele1 to generate the processed form of dele1 (S-DELE1), which translocates to the cytosol and activates eif2ak1/hri to trigger the ISR. Required for the stability of the respiratory supercomplexes. In Danio rerio (Zebrafish), this protein is Metalloendopeptidase OMA1, mitochondrial.